The chain runs to 315 residues: NAD-dependent protein deacylase sirtuin-5, mitochondrial (315 aa).

The N-terminal 39 residues, 1–39 (MSLLHFATRRLILQVLRELGLKAPPVHKTLKICIAMSRP), are a transit peptide targeting the mitochondrion. Residues 40–312 (SSNMADFRRF…PEALSPHESE (273 aa)) form the Deacetylase sirtuin-type domain. 61–80 (GAGVSAESGVPTFRGPGGFW) is an NAD(+) binding site. 2 residues coordinate substrate: Tyr-105 and Arg-108. Position 143–146 (143–146 (QNID)) interacts with NAD(+). The Proton acceptor role is filled by His-161. Residues 254-256 (GTS), 280-282 (NTV), and Cys-298 each bind NAD(+).

The protein belongs to the sirtuin family. Class III subfamily. As to quaternary structure, monomer. Homodimer. Interacts with CPS1.

It localises to the mitochondrion. It is found in the cytoplasm. Its subcellular location is the cytosol. The protein resides in the nucleus. The enzyme catalyses N(6)-malonyl-L-lysyl-[protein] + NAD(+) + H2O = 2''-O-malonyl-ADP-D-ribose + nicotinamide + L-lysyl-[protein]. The catalysed reaction is N(6)-succinyl-L-lysyl-[protein] + NAD(+) + H2O = 2''-O-succinyl-ADP-D-ribose + nicotinamide + L-lysyl-[protein]. It carries out the reaction N(6)-glutaryl-L-lysyl-[protein] + NAD(+) + H2O = 2''-O-glutaryl-ADP-D-ribose + nicotinamide + L-lysyl-[protein]. Functionally, NAD-dependent lysine demalonylase, desuccinylase and deglutarylase that specifically removes malonyl, succinyl and glutaryl groups on target proteins. Activates CPS1 and contributes to the regulation of blood ammonia levels during prolonged fasting: acts by mediating desuccinylation and deglutarylation of CPS1, thereby increasing CPS1 activity in response to elevated NAD levels during fasting. Activates SOD1 by mediating its desuccinylation, leading to reduced reactive oxygen species. Activates SHMT2 by mediating its desuccinylation. Modulates ketogenesis through the desuccinylation and activation of HMGCS2. Has weak NAD-dependent protein deacetylase activity; however this activity may not be physiologically relevant in vivo. Can deacetylate cytochrome c (CYCS) and a number of other proteins in vitro such as UOX. The protein is NAD-dependent protein deacylase sirtuin-5, mitochondrial of Monodelphis domestica (Gray short-tailed opossum).